The sequence spans 447 residues: MLENIRDAVRKFLTRSTPYEKAVDEFIKELQKSLISSDVNVKLVFSLTAKIKERLNKEKPPSVLERKEWFISIVYDELSKLFGGDKEPNVNPTKLPFIIMLVGVQGSGKTTTAGKLAYFYKRRGYKVGLVAADVYRPAAYDQLLQLGNQIGVPVYGEPNNQNAIEIAKKGVDTFVKNKMDIIIVDTAGRHGYGEETKLLEEMKEIYEALKPDDVILVIDASIGQKAYDLASRFHQASPIGSIIITKMDGTAKGGGALSAVAATGATIKFIGTGEKIDELEIFNAKRYVSRILGMGDIESILEKVKGLEEYEKIQKKMEDVMEGKGKLTLRDVYAQIMALRKMGPLSKVLQHIPGLGVMLPTPSEDQLKLGEEKIRRWLAALNSMTYKELENPSIIDKSRMRRIAEGSGLEVEDVRELLEWYNNMNKLLKMVKRRRGSIDKLFGGKIG.

GTP is bound by residues 103 to 110 (GVQGSGKT), 185 to 189 (DTAGR), and 245 to 248 (TKMD).

This sequence belongs to the GTP-binding SRP family. SRP54 subfamily. In terms of assembly, part of the signal recognition particle protein translocation system, which is composed of SRP and FtsY. Archaeal SRP consists of a 7S RNA molecule of 300 nucleotides and two protein subunits: SRP54 and SRP19.

The protein localises to the cytoplasm. The enzyme catalyses GTP + H2O = GDP + phosphate + H(+). In terms of biological role, involved in targeting and insertion of nascent membrane proteins into the cytoplasmic membrane. Binds to the hydrophobic signal sequence of the ribosome-nascent chain (RNC) as it emerges from the ribosomes. The SRP-RNC complex is then targeted to the cytoplasmic membrane where it interacts with the SRP receptor FtsY. The protein is Signal recognition particle 54 kDa protein of Saccharolobus islandicus (strain Y.N.15.51 / Yellowstone #2) (Sulfolobus islandicus).